A 465-amino-acid polypeptide reads, in one-letter code: Pancreatic triacylglycerol lipase (465 aa).

The signal sequence occupies residues 1–16 (MLMLWTFAVLLGAVAG). Intrachain disulfides connect cysteine 20–cysteine 26 and cysteine 107–cysteine 118. Catalysis depends on serine 169, which acts as the Nucleophile. The Charge relay system role is filled by aspartate 193. Glutamate 204, arginine 207, aspartate 209, and aspartate 212 together coordinate Ca(2+). Cysteine 254 and cysteine 278 form a disulfide bridge. Histidine 280 acts as the Charge relay system in catalysis. Cystine bridges form between cysteine 302-cysteine 313, cysteine 316-cysteine 321, and cysteine 449-cysteine 465. In terms of domain architecture, PLAT spans 355 to 465 (WRYQVTVTLS…EDVLLTLSPC (111 aa)).

The protein belongs to the AB hydrolase superfamily. Lipase family. As to quaternary structure, forms a 1:1 stoichiometric complex with (pro)colipase/CLPS. As to expression, pancreas.

It localises to the secreted. The catalysed reaction is a triacylglycerol + H2O = a diacylglycerol + a fatty acid + H(+). It catalyses the reaction 1,2,3-tri-(9Z-octadecenoyl)-glycerol + H2O = di-(9Z)-octadecenoylglycerol + (9Z)-octadecenoate + H(+). It carries out the reaction 1,2,3-tributanoylglycerol + H2O = dibutanoylglycerol + butanoate + H(+). The enzyme catalyses all-trans-retinyl hexadecanoate + H2O = all-trans-retinol + hexadecanoate + H(+). The catalysed reaction is 1,2-di-(9Z-octadecenoyl)-glycerol + H2O = (9Z-octadecenoyl)-glycerol + (9Z)-octadecenoate + H(+). Inhibited by bile salts, is reactivated by (pro)colipase/CLPS. Functionally, plays an important role in fat metabolism. It preferentially splits the esters of long-chain fatty acids at positions 1 and 3, producing mainly 2-monoacylglycerol and free fatty acids, and shows considerably higher activity against insoluble emulsified substrates than against soluble ones. In Mus musculus (Mouse), this protein is Pancreatic triacylglycerol lipase.